The sequence spans 274 residues: Bis(5'-nucleosyl)-tetraphosphatase, symmetrical (274 aa).

The protein belongs to the Ap4A hydrolase family.

The enzyme catalyses P(1),P(4)-bis(5'-adenosyl) tetraphosphate + H2O = 2 ADP + 2 H(+). Functionally, hydrolyzes diadenosine 5',5'''-P1,P4-tetraphosphate to yield ADP. In Shewanella oneidensis (strain ATCC 700550 / JCM 31522 / CIP 106686 / LMG 19005 / NCIMB 14063 / MR-1), this protein is Bis(5'-nucleosyl)-tetraphosphatase, symmetrical.